Here is a 329-residue protein sequence, read N- to C-terminus: MLLNGIVAAVITMIITIIGIPRFIMFFHKKKLGGQPTLEDVKQHASKAGTPTMGGFVFVVVSLVVSLVAALVFGKFSPAFITAWWVFAMYAVIGFLDDFLKVFKQINEGLTAKQKMLAQILIGIVSYFIYSHGEKSHIIHILSWQVNIGIFFSIFIIIWLVGWSNAVNLTDGIDGLASITVAISLTAYAVIAVVHQQYDVLLIILSVIGGLLGFFVFNHKPAKIFMGDVGSLALGGFLAIVSILLHAEWTLLLIGAVYVIETLSVMLQVAYFKKTGGKRIFRMTPIHHHFELGGFSGKAAGWSEWKIDIVFWLFTAVLSVIALCIYFAF.

A run of 9 helical transmembrane segments spans residues 1-21 (MLLN…IGIP), 53-73 (MGGF…ALVF), 76-96 (FSPA…IGFL), 109-129 (GLTA…SYFI), 141-161 (ILSW…IWLV), 175-195 (GLAS…AVVH), 198-218 (YDVL…FVFN), 237-257 (FLAI…IGAV), and 309-329 (IVFW…YFAF).

Belongs to the glycosyltransferase 4 family. MraY subfamily. Mg(2+) is required as a cofactor.

The protein resides in the cell membrane. It carries out the reaction UDP-N-acetyl-alpha-D-muramoyl-L-alanyl-gamma-D-glutamyl-L-lysyl-D-alanyl-D-alanine + di-trans,octa-cis-undecaprenyl phosphate = Mur2Ac(oyl-L-Ala-gamma-D-Glu-L-Lys-D-Ala-D-Ala)-di-trans,octa-cis-undecaprenyl diphosphate + UMP. It functions in the pathway cell wall biogenesis; peptidoglycan biosynthesis. Catalyzes the initial step of the lipid cycle reactions in the biosynthesis of the cell wall peptidoglycan: transfers peptidoglycan precursor phospho-MurNAc-pentapeptide from UDP-MurNAc-pentapeptide onto the lipid carrier undecaprenyl phosphate, yielding undecaprenyl-pyrophosphoryl-MurNAc-pentapeptide, known as lipid I. The polypeptide is Phospho-N-acetylmuramoyl-pentapeptide-transferase (Lactococcus lactis subsp. cremoris (strain MG1363)).